The primary structure comprises 89 residues: Late cornified envelope protein 3A (89 aa).

Low complexity-rich tracts occupy residues 1 to 10 (MSCQQNQQQC) and 17 to 46 (PAKS…SERS). 2 disordered regions span residues 1–46 (MSCQ…SERS) and 62–89 (CQSS…AGCC).

Belongs to the LCE family. Interacts with CYSRT1; the interaction is direct. As to expression, skin-specific. Expression was readily detected in adult trunk skin, adult arm skin, fetal skin, penal skin, vulva, esophagus and tongue. Not expressed in the cervix, rectum, lung, colon, or placenta.

In terms of biological role, a structural component of the cornified envelope of the stratum corneum involved in innate cutaneous host defense. Possesses defensin-like antimicrobial activity against a broad spectrum of Gram-positive and Gram-negative bacteria, both aerobic and anaerobic species. Upon inflammation, may regulate skin barrier repair by shaping cutaneous microbiota composition and immune response to bacterial antigens. In Homo sapiens (Human), this protein is Late cornified envelope protein 3A.